A 376-amino-acid chain; its full sequence is 3-aminomethylindole N-methyltransferase (376 aa).

S-adenosyl-L-homocysteine contacts are provided by G220, D243, D263, and M264.

The protein belongs to the class I-like SAM-binding methyltransferase superfamily. Cation-independent O-methyltransferase family. As to expression, more present in the fifth leaf than in the second leaf (at protein level).

The enzyme catalyses 3-(aminomethyl)indole + 2 S-adenosyl-L-methionine = gramine + 2 S-adenosyl-L-homocysteine + 2 H(+). It functions in the pathway alkaloid biosynthesis. With respect to regulation, repressed by sodium carbonate, sodium bicarbonate and K-phosphate. In terms of biological role, methylates 3-aminomethylindole (AMI) and N-methyl-3-aminomethylindole (MAMI), two substrates involved in gramine biosynthesis, a toxic indole alkaloid. Can use S-adenosyl-L-methionine (AdoMet) as a methyl donor. Unable to mediate caffeic acid O-methylation. This chain is 3-aminomethylindole N-methyltransferase, found in Hordeum vulgare subsp. vulgare (Domesticated barley).